We begin with the raw amino-acid sequence, 397 residues long: Acetyl-CoA acetyltransferase, cytosolic (397 aa).

N-acetylmethionine is present on methionine 1. Cysteine 92 serves as the catalytic Acyl-thioester intermediate. Lysine 200 carries the post-translational modification N6-acetyllysine. CoA is bound by residues arginine 223 and serine 226. Residues lysine 233 and lysine 235 each carry the N6-acetyllysine modification. Serine 252 contacts CoA. Catalysis depends on cysteine 383, which acts as the Proton donor/acceptor.

This sequence belongs to the thiolase-like superfamily. Thiolase family. Homotetramer.

It is found in the cytoplasm. It localises to the cytosol. The catalysed reaction is 2 acetyl-CoA = acetoacetyl-CoA + CoA. The protein operates within lipid metabolism; fatty acid metabolism. Involved in the biosynthetic pathway of cholesterol. In Rattus norvegicus (Rat), this protein is Acetyl-CoA acetyltransferase, cytosolic (Acat2).